The chain runs to 520 residues: Probable kinase 098L (520 aa).

The 312-residue stretch at 82–393 folds into the Protein kinase domain; sequence LTSVQSFGSK…NSPLLKKGFV (312 aa). ATP-binding positions include 88-96 and Lys111; that span reads FGSKSKQGI. Asp205 serves as the catalytic Proton acceptor. Positions 416–442 form a coiled coil; the sequence is QTAQLIETDKEILDNLIDDLELKIVRK.

Belongs to the protein kinase superfamily.

In terms of biological role, probable kinase. The chain is Probable kinase 098L from Aedes vexans (Inland floodwater mosquito).